Here is a 159-residue protein sequence, read N- to C-terminus: Putative ribosomal RNA large subunit methyltransferase H (159 aa).

Residues Leu76, Gly108, and 127-132 (FSKMTF) each bind S-adenosyl-L-methionine.

This sequence belongs to the RNA methyltransferase RlmH family.

The protein resides in the cytoplasm. It catalyses the reaction pseudouridine(1915) in 23S rRNA + S-adenosyl-L-methionine = N(3)-methylpseudouridine(1915) in 23S rRNA + S-adenosyl-L-homocysteine + H(+). Specifically methylates the pseudouridine at position 1915 (m3Psi1915) in 23S rRNA. This chain is Putative ribosomal RNA large subunit methyltransferase H, found in Methanococcus vannielii (strain ATCC 35089 / DSM 1224 / JCM 13029 / OCM 148 / SB).